We begin with the raw amino-acid sequence, 906 residues long: Envelope glycoprotein B (906 aa).

Residues 1-31 (MESRIWCLVVCVNLCIVCLGAAVSSSSTSHA) form the signal peptide. A compositionally biased stretch (low complexity) spans 29–46 (SHATSSTHNGSHTSRTTS). Positions 29 to 51 (SHATSSTHNGSHTSRTTSAQTRS) are disordered. The Virion surface segment spans residues 32–750 (TSSTHNGSHT…EGVATFLKNP (719 aa)). N-linked (GlcNAc...) asparagine; by host glycosylation is found at Asn-37, Asn-68, Asn-73, and Asn-85. Disulfide bonds link Cys-94/Cys-550, Cys-111/Cys-506, Cys-185/Cys-250, Cys-246/Cys-250, and Cys-344/Cys-391. Residues 152 to 158 (SYAYIYT) are involved in fusion and/or binding to host membrane. N-linked (GlcNAc...) asparagine; by host glycosylation occurs at Asn-208. An involved in fusion and/or binding to host membrane region spans residues 237-244 (GSTWLYRE). 14 N-linked (GlcNAc...) asparagine; by host glycosylation sites follow: Asn-281, Asn-286, Asn-302, Asn-341, Asn-383, Asn-405, Asn-409, Asn-417, Asn-447, Asn-452, Asn-464, Asn-465, Asn-554, and Asn-585. The cysteines at positions 573 and 610 are disulfide-linked. 2 hydrophobic membrane proximal region regions span residues 696 to 748 (VEDK…TFLK) and 727 to 747 (VAIGAVGGAVASVVEGVATFL). Residues 751-771 (FGAFTIILVAIAVVIITYLIY) form a helical membrane-spanning segment. The Intravirion portion of the chain corresponds to 772–906 (TRQRRLCTQP…LKDSDEEENV (135 aa)). Composition is skewed to polar residues over residues 797-809 (VTSGSTKDTSLQA) and 859-876 (RAQQNGTDSLDGQTGTQD). Disordered regions lie at residues 797–837 (VTSG…TAAP) and 856–906 (AEQR…EENV). Residues 877-886 (KGQKPNLLDR) are compositionally biased toward basic and acidic residues. Positions 894 to 897 (YRHL) match the Internalization motif motif.

It belongs to the herpesviridae glycoprotein B family. As to quaternary structure, homotrimer; disulfide-linked. Binds to heparan sulfate proteoglycans. Interacts with gH/gL heterodimer. Interacts with host TLR1 and TLR2. Interacts with host C-type lectin CD209/DC-SIGN. Interacts with host ITGB1, EGFR, and PDGFRA. In terms of processing, a proteolytic cleavage by host furin generates two subunits that remain linked by disulfide bonds.

It localises to the virion membrane. It is found in the host cell membrane. The protein localises to the host endosome membrane. The protein resides in the host Golgi apparatus membrane. In terms of biological role, envelope glycoprotein that plays a role in host cell entry, cell to-cell virus transmission, and fusion of infected cells. May be involved in the initial attachment via binding to heparan sulfate together with the gM/gN complex that binds heparin with higher affinity. Interacts with host integrin ITGB1, PDGFRA and EGFR that likely serve as postattachment entry receptors. Also participates in the fusion of viral and cellular membranes leading to virus entry into the host cell. Membrane fusion is mediated by the fusion machinery composed at least of gB and the heterodimer gH/gL. This is Envelope glycoprotein B from Human cytomegalovirus (strain AD169) (HHV-5).